The chain runs to 906 residues: Glutamate receptor 1 (906 aa).

The N-terminal stretch at 1 to 18 (MQHIFAFFCTGFLGAVVG) is a signal peptide. The Extracellular segment spans residues 19 to 536 (ANFPNNIQIG…GVFSFLDPLA (518 aa)). Residues N63, N249, N257, N363, N401, and N406 are each glycosylated (N-linked (GlcNAc...) asparagine). Residues C75 and C323 are joined by a disulfide bond. Residues P492, T494, and R499 each coordinate L-glutamate. A helical transmembrane segment spans residues 537-557 (YEIWMCIVFAYIGVSVVLFLV). Residues 558 to 584 (SRFSPYEWHSEEFEEGRDQTTSDQSNE) lie on the Cytoplasmic side of the membrane. An intramembrane region (helical; Pore-forming) is located at residues 585–600 (FGIFNSLWFSLGAFMQ). Residues 601 to 603 (QGC) lie within the membrane without spanning it. C603 is lipidated: S-palmitoyl cysteine. At 604–609 (DISPRS) the chain is on the cytoplasmic side. Residues 610–630 (LSGRIVGGVWWFFTLIIISSY) form a helical membrane-spanning segment. Residues 631–805 (TANLAAFLTV…DKTSALSLSN (175 aa)) lie on the Extracellular side of the membrane. A Phosphoserine modification is found at S645. Residues S668 and T669 each contribute to the L-glutamate site. S710 is subject to Phosphoserine. E719 contacts L-glutamate. A disulfide bridge links C732 with C787. The helical transmembrane segment at 806–826 (VAGVFYILIGGLGLAMLVALI) threads the bilayer. The Cytoplasmic segment spans residues 827-906 (EFCYKSRSES…SGMPLGATGL (80 aa)). Residue C829 is the site of S-palmitoyl cysteine attachment. Residues S849 and S863 each carry the phosphoserine modification. The disordered stretch occupies residues 861–880 (RNSGAGASSAGSGENGRVVS). The span at 863 to 872 (SGAGASSAGS) shows a compositional bias: low complexity. The PDZ-binding motif lies at 903 to 906 (ATGL).

This sequence belongs to the glutamate-gated ion channel (TC 1.A.10.1) family. GRIA1 subfamily. In terms of assembly, homotetramer or heterotetramer of pore-forming glutamate receptor subunits; heteromeric assembly can be the result of both receptor subtype and flip-flop forms and according the composition, one partner can be dominant with respect to the fast desensitizing current component, whereas the other can determine the steady-state component. Tetramers may be formed by the dimerization of dimers. Found in a complex with GRIA2, GRIA3, GRIA4, CNIH2, CNIH3, CACNG2, CACNG3, CACNG4, CACNG5, CACNG7 and CACNG8. Interacts with HIP1 and RASGRF2. Interacts with SYNDIG1 and GRIA2. Interacts with DLG1 (via C-terminus). Interacts with LRFN1. Interacts with PRKG2. Interacts with CNIH2 and CACNG2. Interacts with CACNG5; this interaction modulates the gating. Interacts (via C-terminus) with PDLIM4 (via LIM domain); this interaction as well as the interaction of PDLIM4 with alpha-actinin is required for their colocalization in early endosomes. Interacts with SNX27 (via PDZ domain); the interaction is required for recycling to the plasma membrane when endocytosed and prevent degradation in lysosomes. Interacts (via PDZ-binding motif) with SHANK3 (via PDZ domain). Interacts with CACNG3; associates GRIA1 with the adapter protein complex 4 (AP-4) to target GRIA1 to the somatodendritic compartment of neurons. Interacts with CACNG2; this interaction mediates traffick to the plasma membrane and modulation of desensitization. Interaction with CNIH2 and CNIH3; this interaction promotes expression at the plasma membrane and extensively modulates their gating properties by slowing deactivation and desensitization kinetics. Found in a complex with GRIA2, GRIA3, GRIA4, DLG4, CACNG8 and CNIH2. In terms of processing, phosphorylated at Ser-645. Phosphorylated at Ser-710 by PKC. Phosphorylated at Ser-849 by PKC, PKA and CAMK2. Phosphorylated at Ser-863 by PKC, PKA and PRKG2. Phosphorylation of Ser-863 is reduced by induction of long-term depression and increased by induction of long-term potentiation. Palmitoylated. Depalmitoylated by CPT1C and upon L-glutamate stimulation. ZDHHC3/GODZ specifically palmitoylates Cys-603, which leads to Golgi retention and decreased cell surface expression. In contrast, Cys-829 palmitoylation does not affect cell surface expression but regulates stimulation-dependent endocytosis.

The protein localises to the cell membrane. The protein resides in the endoplasmic reticulum membrane. It is found in the postsynaptic cell membrane. Its subcellular location is the postsynaptic density membrane. It localises to the cell projection. The protein localises to the dendrite. The protein resides in the dendritic spine. It is found in the early endosome membrane. Its subcellular location is the recycling endosome membrane. It localises to the presynapse. The protein localises to the synapse. The catalysed reaction is Ca(2+)(in) = Ca(2+)(out). The enzyme catalyses Na(+)(in) = Na(+)(out). It carries out the reaction Mg(2+)(in) = Mg(2+)(out). It catalyses the reaction Li(+)(in) = Li(+)(out). The catalysed reaction is K(+)(in) = K(+)(out). The enzyme catalyses Sr(2+)(in) = Sr(2+)(out). Its function is as follows. Ionotropic glutamate receptor that functions as a ligand-gated cation channel, gated by L-glutamate and glutamatergic agonists such as alpha-amino-3-hydroxy-5-methyl-4-isoxazolepropionic acid (AMPA), quisqualic acid, and kainic acid. L-glutamate acts as an excitatory neurotransmitter at many synapses in the central nervous system. Binding of the excitatory neurotransmitter L-glutamate induces a conformation change, leading to the opening of the cation channel, and thereby converts the chemical signal to an electrical impulse upon entry of monovalent and divalent cations such as sodium and calcium. The receptor then desensitizes rapidly and enters in a transient inactive state, characterized by the presence of bound agonist. In the presence of CACNG2 or CACNG4 or CACNG7 or CACNG8, shows resensitization which is characterized by a delayed accumulation of current flux upon continued application of L-glutamate. Calcium (Ca(2+)) permeability depends on subunits composition and, heteromeric channels containing edited GRIA2 subunit are calcium-impermeable. Also permeable to other divalents cations such as strontium(2+) and magnesium(2+) and monovalent cations such as potassium(1+) and lithium(1+). In Macaca fascicularis (Crab-eating macaque), this protein is Glutamate receptor 1.